The sequence spans 458 residues: MSITKEFDTITAISTPLGEGAIGIVRLSGTDALAIAQSVFKGKSLEQVASHTINYGHIIDPKTGTIIDEVMVSVMLAPKTFTRENVVEINTHGGIAVTNEILQLLIRQGARMAEPGEFTKRAFLNGRVDLTQAEAVMDIIRAKTDKAMTIAVKQLDGSLSQLINDTRQEILNTLAQVEVNIDYPEYDDVEEMTTALLREKTQEFQSLLENLLRTAKRGKILREGLSTAIIGRPNVGKSSLLNNLLREDKAIVTDIAGTTRDVIEEYVNIKGVPLKLVDTAGIRETDDLVEQIGVERSKKALQEADLVLLVLNASEKLTDQDRALLNLSQDSNRIILLNKTDLEQKIELEQLPDDYIPISVLTNQNINLIEDRINQLFFDNAGLVEQDATYLSNARHISLIEKAVQSLEAVNDGLALGMPVDLLQVDLTRTWEILGEITGDAAPDELITQLFSQFCLGK.

3 residues coordinate (6S)-5-formyl-5,6,7,8-tetrahydrofolate: R26, E88, and R127. Residues 224 to 378 (GLSTAIIGRP…IEDRINQLFF (155 aa)) enclose the TrmE-type G domain. N234 contributes to the K(+) binding site. GTP is bound by residues 234–239 (NVGKSS), 253–259 (TDIAGTT), and 278–281 (DTAG). S238 is a binding site for Mg(2+). 3 residues coordinate K(+): T253, I255, and T258. T259 serves as a coordination point for Mg(2+). K458 provides a ligand contact to (6S)-5-formyl-5,6,7,8-tetrahydrofolate.

This sequence belongs to the TRAFAC class TrmE-Era-EngA-EngB-Septin-like GTPase superfamily. TrmE GTPase family. Homodimer. Heterotetramer of two MnmE and two MnmG subunits. The cofactor is K(+).

Its subcellular location is the cytoplasm. Functionally, exhibits a very high intrinsic GTPase hydrolysis rate. Involved in the addition of a carboxymethylaminomethyl (cmnm) group at the wobble position (U34) of certain tRNAs, forming tRNA-cmnm(5)s(2)U34. This chain is tRNA modification GTPase MnmE, found in Streptococcus pyogenes serotype M5 (strain Manfredo).